A 418-amino-acid polypeptide reads, in one-letter code: Serine hydroxymethyltransferase (418 aa).

(6S)-5,6,7,8-tetrahydrofolate is bound by residues Leu121 and 125–127 (GHL). The residue at position 230 (Lys230) is an N6-(pyridoxal phosphate)lysine. Residues Glu246 and 355-357 (SPF) each bind (6S)-5,6,7,8-tetrahydrofolate.

The protein belongs to the SHMT family. As to quaternary structure, homodimer. It depends on pyridoxal 5'-phosphate as a cofactor.

It is found in the cytoplasm. The catalysed reaction is (6R)-5,10-methylene-5,6,7,8-tetrahydrofolate + glycine + H2O = (6S)-5,6,7,8-tetrahydrofolate + L-serine. The protein operates within one-carbon metabolism; tetrahydrofolate interconversion. It participates in amino-acid biosynthesis; glycine biosynthesis; glycine from L-serine: step 1/1. In terms of biological role, catalyzes the reversible interconversion of serine and glycine with tetrahydrofolate (THF) serving as the one-carbon carrier. This reaction serves as the major source of one-carbon groups required for the biosynthesis of purines, thymidylate, methionine, and other important biomolecules. Also exhibits THF-independent aldolase activity toward beta-hydroxyamino acids, producing glycine and aldehydes, via a retro-aldol mechanism. In Streptococcus pneumoniae (strain Taiwan19F-14), this protein is Serine hydroxymethyltransferase.